The chain runs to 242 residues: Small ribosomal subunit protein uS2 (242 aa).

Belongs to the universal ribosomal protein uS2 family.

In Tolumonas auensis (strain DSM 9187 / NBRC 110442 / TA 4), this protein is Small ribosomal subunit protein uS2.